The chain runs to 172 residues: Centrin-1 (172 aa).

The interval 1–31 (MASGFKKPSAASTGQKRKVAPKPELTEDQKQ) is disordered. 4 EF-hand domains span residues 28–63 (DQKQ…LGFE), 64–99 (PRKE…KMSE), 101–136 (DTKE…LGEN), and 137–172 (LTDE…TSLY). D41, D43, S45, T47, and E52 together coordinate Ca(2+). Positions 150, 152, 154, 156, and 161 each coordinate Ca(2+).

Belongs to the centrin family. As to quaternary structure, monomer. Interacts with CIMAP3. Interacts with USP49.

The protein resides in the cytoplasm. It localises to the cytoskeleton. The protein localises to the microtubule organizing center. Its subcellular location is the centrosome. It is found in the cell projection. The protein resides in the cilium. Plays a fundamental role in microtubule-organizing center structure and function. Plays a role in sperm cilia formation. This chain is Centrin-1, found in Homo sapiens (Human).